A 347-amino-acid chain; its full sequence is Protein RecA (347 aa).

Residue 67 to 74 (GPESSGKT) coordinates ATP.

It belongs to the RecA family.

It is found in the cytoplasm. In terms of biological role, can catalyze the hydrolysis of ATP in the presence of single-stranded DNA, the ATP-dependent uptake of single-stranded DNA by duplex DNA, and the ATP-dependent hybridization of homologous single-stranded DNAs. It interacts with LexA causing its activation and leading to its autocatalytic cleavage. This chain is Protein RecA, found in Paenarthrobacter aurescens (strain TC1).